We begin with the raw amino-acid sequence, 416 residues long: Geranyl diphosphate synthase (416 aa).

Mg(2+) is bound by residues aspartate 157 and aspartate 161. A DDXXD motif motif is present at residues 157–161 (DDIMD).

This sequence belongs to the FPP/GGPP synthase family. The cofactor is Mg(2+). In terms of tissue distribution, specifically expressed in the anterior midgut of male beetles, the site of aggregation pheromone biosynthesis.

The enzyme catalyses isopentenyl diphosphate + dimethylallyl diphosphate = (2E)-geranyl diphosphate + diphosphate. The protein operates within pheromone biosynthesis. Its function is as follows. Geranyl diphosphate synthase involved in pheromone biosynthesis. The sequence is that of Geranyl diphosphate synthase from Ips pini (Pine engraver beetle).